A 116-amino-acid chain; its full sequence is DNA-directed RNA polymerase subunit omega (116 aa).

Belongs to the RNA polymerase subunit omega family. As to quaternary structure, the RNAP catalytic core consists of 2 alpha, 1 beta, 1 beta' and 1 omega subunit. When a sigma factor is associated with the core the holoenzyme is formed, which can initiate transcription.

The enzyme catalyses RNA(n) + a ribonucleoside 5'-triphosphate = RNA(n+1) + diphosphate. Promotes RNA polymerase assembly. Latches the N- and C-terminal regions of the beta' subunit thereby facilitating its interaction with the beta and alpha subunits. In Hyphomonas neptunium (strain ATCC 15444), this protein is DNA-directed RNA polymerase subunit omega.